The primary structure comprises 440 residues: 2-phosphinomethylmalate synthase (440 aa).

Residues 39-313 form the Pyruvate carboxyltransferase domain; that stretch reads VWLSETTHRD…GARVNLPAVN (275 aa).

Belongs to the alpha-IPM synthase/homocitrate synthase family. As to quaternary structure, homodimer. Requires Mn(2+) as cofactor. It depends on Co(2+) as a cofactor.

The enzyme catalyses 3-(hydrohydroxyphosphoryl)pyruvate + acetyl-CoA + H2O = phosphinomethylmalate + CoA + H(+). It participates in secondary metabolite biosynthesis; bialaphos biosynthesis. With respect to regulation, strongly inhibited by p-chloromercuribenzoate (pCMB), iodoacetamide (IA) and EDTA. Involved in the biosynthesis of phosphinothricin tripeptide (PTT), also known as bialaphos (BA), a natural-product antibiotic and potent herbicide. Catalyzes the condensation berween phosphinopyruvic acid (PPA), an analog of oxalacetic acid, and acetyl-CoA to form R-2-phosphinomethylmalic acid (PMM). Can also act on oxaloacetate, but shows no activity when acetyl-CoA is substituted by propionyl-CoA or butyryl-CoA. This is 2-phosphinomethylmalate synthase from Streptomyces hygroscopicus.